The primary structure comprises 543 residues: Glucose-6-phosphate isomerase (543 aa).

The Proton donor role is filled by glutamate 353. Catalysis depends on residues histidine 384 and lysine 504.

This sequence belongs to the GPI family.

It localises to the cytoplasm. It carries out the reaction alpha-D-glucose 6-phosphate = beta-D-fructose 6-phosphate. It functions in the pathway carbohydrate biosynthesis; gluconeogenesis. Its pathway is carbohydrate degradation; glycolysis; D-glyceraldehyde 3-phosphate and glycerone phosphate from D-glucose: step 2/4. Its function is as follows. Catalyzes the reversible isomerization of glucose-6-phosphate to fructose-6-phosphate. The chain is Glucose-6-phosphate isomerase from Roseiflexus castenholzii (strain DSM 13941 / HLO8).